The following is a 366-amino-acid chain: Class I histocompatibility antigen, Gogo-C*0202 alpha chain (366 aa).

An N-terminal signal peptide occupies residues 1–24 (MRVMAPRTLILLLSGALALTETWA). Residues 25-114 (GSHSMRYFYT…LRGYYNQSED (90 aa)) are alpha-1. Topologically, residues 25 to 308 (GSHSMRYFYT…EPSSQPTIPI (284 aa)) are extracellular. N-linked (GlcNAc...) asparagine glycosylation occurs at N110. Residues 115–206 (GSHTLQSMYG…ENGKETLQRA (92 aa)) form an alpha-2 region. Intrachain disulfides connect C125–C188 and C227–C283. The alpha-3 stretch occupies residues 207–298 (EPPKTHVTHH…GLPEPLTLRW (92 aa)). The Ig-like C1-type domain maps to 209 to 297 (PKTHVTHHPL…EGLPEPLTLR (89 aa)). The tract at residues 299-308 (EPSSQPTIPI) is connecting peptide. A helical membrane pass occupies residues 309–332 (VGIVVGLAVLVVLAVLGAVVTAMM). At 333 to 366 (CRRKSSGGKGGSCSQAACSNSAQGSDESLITCKA) the chain is on the cytoplasmic side.

Belongs to the MHC class I family. As to quaternary structure, heterodimer of an alpha chain and a beta chain (beta-2-microglobulin).

The protein resides in the membrane. In terms of biological role, involved in the presentation of foreign antigens to the immune system. This is Class I histocompatibility antigen, Gogo-C*0202 alpha chain from Gorilla gorilla gorilla (Western lowland gorilla).